An 813-amino-acid polypeptide reads, in one-letter code: Protein translocase subunit SecA 2 (813 aa).

ATP contacts are provided by residues glutamine 105, 123-127, and aspartate 525; that span reads GEGKT.

Belongs to the SecA family. Monomer and homodimer. Part of the essential Sec protein translocation apparatus which comprises SecA, SecYEG and auxiliary proteins SecDF-YajC and YidC.

The protein localises to the cell inner membrane. It localises to the cytoplasm. The catalysed reaction is ATP + H2O + cellular proteinSide 1 = ADP + phosphate + cellular proteinSide 2.. In terms of biological role, part of the Sec protein translocase complex. Interacts with the SecYEG preprotein conducting channel. Has a central role in coupling the hydrolysis of ATP to the transfer of proteins into and across the cell membrane, serving both as a receptor for the preprotein-SecB complex and as an ATP-driven molecular motor driving the stepwise translocation of polypeptide chains across the membrane. In Rhodopseudomonas palustris (strain BisA53), this protein is Protein translocase subunit SecA 2.